The sequence spans 329 residues: Biotin synthase (329 aa).

The Radical SAM core domain occupies Phe-46 to Ser-275. Residues Cys-64, Cys-68, and Cys-71 each contribute to the [4Fe-4S] cluster site. [2Fe-2S] cluster is bound by residues Cys-108, Cys-140, Cys-200, and Arg-273.

The protein belongs to the radical SAM superfamily. Biotin synthase family. Homodimer. Requires [4Fe-4S] cluster as cofactor. [2Fe-2S] cluster serves as cofactor.

The catalysed reaction is (4R,5S)-dethiobiotin + (sulfur carrier)-SH + 2 reduced [2Fe-2S]-[ferredoxin] + 2 S-adenosyl-L-methionine = (sulfur carrier)-H + biotin + 2 5'-deoxyadenosine + 2 L-methionine + 2 oxidized [2Fe-2S]-[ferredoxin]. It participates in cofactor biosynthesis; biotin biosynthesis; biotin from 7,8-diaminononanoate: step 2/2. Catalyzes the conversion of dethiobiotin (DTB) to biotin by the insertion of a sulfur atom into dethiobiotin via a radical-based mechanism. This is Biotin synthase from Thermus thermophilus (strain ATCC BAA-163 / DSM 7039 / HB27).